A 444-amino-acid chain; its full sequence is Glutamate-1-semialdehyde 2,1-aminomutase (444 aa).

The residue at position 278 (Lys278) is an N6-(pyridoxal phosphate)lysine.

Belongs to the class-III pyridoxal-phosphate-dependent aminotransferase family. HemL subfamily. As to quaternary structure, homodimer. Pyridoxal 5'-phosphate serves as cofactor.

It localises to the cytoplasm. It carries out the reaction (S)-4-amino-5-oxopentanoate = 5-aminolevulinate. Its pathway is porphyrin-containing compound metabolism; protoporphyrin-IX biosynthesis; 5-aminolevulinate from L-glutamyl-tRNA(Glu): step 2/2. In Deinococcus radiodurans (strain ATCC 13939 / DSM 20539 / JCM 16871 / CCUG 27074 / LMG 4051 / NBRC 15346 / NCIMB 9279 / VKM B-1422 / R1), this protein is Glutamate-1-semialdehyde 2,1-aminomutase.